We begin with the raw amino-acid sequence, 70 residues long: MIIPWQDIAPETLENLIREFVLREGTDYGAIEISLQNKIDQVKTQLEKGEAVIVFSELHETVDIQLKAKF.

The protein belongs to the UPF0270 family.

This Vibrio parahaemolyticus serotype O3:K6 (strain RIMD 2210633) protein is UPF0270 protein VP2791.